The chain runs to 156 residues: Arginine repressor (156 aa).

This sequence belongs to the ArgR family.

The protein localises to the cytoplasm. The protein operates within amino-acid biosynthesis; L-arginine biosynthesis [regulation]. Regulates arginine biosynthesis genes. This Shewanella baltica (strain OS223) protein is Arginine repressor.